Consider the following 252-residue polypeptide: 5-oxoprolinase subunit A 1 (252 aa).

It belongs to the LamB/PxpA family. As to quaternary structure, forms a complex composed of PxpA, PxpB and PxpC.

It carries out the reaction 5-oxo-L-proline + ATP + 2 H2O = L-glutamate + ADP + phosphate + H(+). In terms of biological role, catalyzes the cleavage of 5-oxoproline to form L-glutamate coupled to the hydrolysis of ATP to ADP and inorganic phosphate. The protein is 5-oxoprolinase subunit A 1 of Pseudomonas aeruginosa (strain ATCC 15692 / DSM 22644 / CIP 104116 / JCM 14847 / LMG 12228 / 1C / PRS 101 / PAO1).